Reading from the N-terminus, the 453-residue chain is NADH-quinone oxidoreductase subunit D (453 aa).

Over residues 1–21 (MKDTETRPGRHRAPEPAHPEQ) the composition is skewed to basic and acidic residues. The interval 1–30 (MKDTETRPGRHRAPEPAHPEQPDTTGDTVV) is disordered.

The protein belongs to the complex I 49 kDa subunit family. NDH-1 is composed of 14 different subunits. Subunits NuoB, C, D, E, F, and G constitute the peripheral sector of the complex.

The protein localises to the cell membrane. It carries out the reaction a quinone + NADH + 5 H(+)(in) = a quinol + NAD(+) + 4 H(+)(out). In terms of biological role, NDH-1 shuttles electrons from NADH, via FMN and iron-sulfur (Fe-S) centers, to quinones in the respiratory chain. The immediate electron acceptor for the enzyme in this species is believed to be a menaquinone. Couples the redox reaction to proton translocation (for every two electrons transferred, four hydrogen ions are translocated across the cytoplasmic membrane), and thus conserves the redox energy in a proton gradient. This chain is NADH-quinone oxidoreductase subunit D, found in Nocardia farcinica (strain IFM 10152).